A 278-amino-acid chain; its full sequence is MTVETITPQTPVSLPKTAVICNDFKLDRVNEPARSILEKYSKIPSREILEHVRKIRDEAFAEFPYPCIGRFSFLDLSISQSPKYPEILHRVVNGEKFLDLGCAFGQELRQLVYDGAPSDNLYGSDLHNGLMHLGYDLFRDVSTLKSRFIATNILEGNSDLISQLSGQMNIIYSSLFFHLFDWDQSLVIAKHVLRLLSLQPGSMITGRFVAYRDWNFAKEKLGSTLRFYFDLSSWTQLWKQVEVDTGSKLNIEHWEQSDNMLTDNGIGGYMLCFAITRQ.

S-adenosyl-L-methionine is bound by residues 125–126 (DL), 152–153 (NI), and 153–154 (IL).

This sequence belongs to the class I-like SAM-binding methyltransferase superfamily. In terms of assembly, homodimer.

It carries out the reaction chermesin D + S-adenosyl-L-methionine = chermesin D methyl ester + S-adenosyl-L-homocysteine. The enzyme catalyses asnovolin I + S-adenosyl-L-methionine = asnovolin K + S-adenosyl-L-homocysteine. The protein operates within secondary metabolite biosynthesis; terpenoid biosynthesis. Methyltransferase; part of the gene cluster that mediates the biosynthesis of novofumigatonin, a heavily oxygenated meroterpenoid containing a unique orthoester moiety. The first step of the pathway is the synthesis of 3,5-dimethylorsellinic acid (DMOA) by the polyketide synthase nvfA via condensation of one acetyl-CoA starter unit with 3 malonyl-CoA units and 2 methylations. DMOA is then converted to farnesyl-DMOA by the farnesyltransferase nvfB. Epoxydation by FAD-dependent monooxygenase nvfK, followed by a protonation-initiated cyclization catalyzed by the terpene cyclase nvfL leads to the production of asnavolin H. The short chain dehydrogenase nvfC then as a 3-OH dehydrogenase of asnovolin H to yield chemesin D. There are two branches to synthesize asnovolin A from chemesin D. In one branch, chemesin D undergoes Baeyer-Villiger oxidation by nvfH, methylation by nvfJ, and enoyl reduction by the nvfM D enoylreductase that reduces the double bond between C-5'and C-6', to form respectively asnovolin I, asnovolin K, and asnovolin A. In the other branch, the methylation precedes the Baeyer-Villiger oxidation and the enoyl reduction to yield asnovolin A via the asnovolin J intermediate. Asnovolin A is further converted to fumigatonoid A by the Fe(II)/2-oxoglutarate-dependent dioxygenase nvfI that catalyzes an endoperoxidation reaction. The alpha/beta hydrolase nvfD then acts as an epimerase that converts fumigatonoid A to its C-5' epimer, which then undergoes spontaneous or nvfD-catalyzed lactonization. The following step utilizes the ketoreductase nvfG to produce fumigatonoid B. The dioxygenase nvfE further converts fumigatonoid B into fumigatonoid C. Finally the Fe(II)/2-oxoglutarate-dependent dioxygenase nvfF catalyzes two rounds of oxidation to transform fumigatonoid C into the end product, novofumigatonin A. This chain is Asnovolin E/Chermesin D methyltransferase nvfJ, found in Aspergillus novofumigatus (strain IBT 16806).